Consider the following 374-residue polypeptide: Tetraacyldisaccharide 4'-kinase (374 aa).

59 to 66 is a binding site for ATP; that stretch reads TAGGTGKT.

This sequence belongs to the LpxK family.

It catalyses the reaction a lipid A disaccharide + ATP = a lipid IVA + ADP + H(+). Its pathway is glycolipid biosynthesis; lipid IV(A) biosynthesis; lipid IV(A) from (3R)-3-hydroxytetradecanoyl-[acyl-carrier-protein] and UDP-N-acetyl-alpha-D-glucosamine: step 6/6. Its function is as follows. Transfers the gamma-phosphate of ATP to the 4'-position of a tetraacyldisaccharide 1-phosphate intermediate (termed DS-1-P) to form tetraacyldisaccharide 1,4'-bis-phosphate (lipid IVA). In Elusimicrobium minutum (strain Pei191), this protein is Tetraacyldisaccharide 4'-kinase.